The following is a 655-amino-acid chain: Protein-glucosylgalactosylhydroxylysine glucosidase (655 aa).

W258–D259 provides a ligand contact to substrate. E388 acts as the Proton donor in catalysis. Residue K456–Q457 participates in substrate binding.

This sequence belongs to the glycosyl hydrolase 65 family.

The catalysed reaction is (5R)-5-O-[alpha-D-glucosyl-(1-&gt;2)-beta-D-galactosyl]-5-hydroxy-L-lysyl-[collagen] + H2O = (5R)-5-O-(beta-D-galactosyl)-5-hydroxy-L-lysyl-[collagen] + D-glucose. Its function is as follows. Catalyzes the hydrolysis of glucose from the disaccharide unit linked to hydroxylysine residues of collagen and collagen-like proteins. This chain is Protein-glucosylgalactosylhydroxylysine glucosidase, found in Danio rerio (Zebrafish).